Here is a 156-residue protein sequence, read N- to C-terminus: Endoribonuclease YbeY (156 aa).

Residues His122, His126, and His132 each contribute to the Zn(2+) site.

It belongs to the endoribonuclease YbeY family. Zn(2+) is required as a cofactor.

The protein resides in the cytoplasm. In terms of biological role, single strand-specific metallo-endoribonuclease involved in late-stage 70S ribosome quality control and in maturation of the 3' terminus of the 16S rRNA. The chain is Endoribonuclease YbeY from Syntrophomonas wolfei subsp. wolfei (strain DSM 2245B / Goettingen).